We begin with the raw amino-acid sequence, 91 residues long: Small ribosomal subunit protein bS16c (91 aa).

This sequence belongs to the bacterial ribosomal protein bS16 family.

Its subcellular location is the plastid. The protein resides in the chloroplast. In Pelargonium hortorum (Common geranium), this protein is Small ribosomal subunit protein bS16c.